Consider the following 102-residue polypeptide: ATP-dependent Clp protease adapter protein ClpS (102 aa).

It belongs to the ClpS family. As to quaternary structure, binds to the N-terminal domain of the chaperone ClpA.

In terms of biological role, involved in the modulation of the specificity of the ClpAP-mediated ATP-dependent protein degradation. This chain is ATP-dependent Clp protease adapter protein ClpS, found in Shewanella sp. (strain ANA-3).